The chain runs to 601 residues: DNA mismatch repair protein MutL (601 aa).

Belongs to the DNA mismatch repair MutL/HexB family.

Its function is as follows. This protein is involved in the repair of mismatches in DNA. It is required for dam-dependent methyl-directed DNA mismatch repair. May act as a 'molecular matchmaker', a protein that promotes the formation of a stable complex between two or more DNA-binding proteins in an ATP-dependent manner without itself being part of a final effector complex. The chain is DNA mismatch repair protein MutL from Listeria monocytogenes serovar 1/2a (strain ATCC BAA-679 / EGD-e).